Consider the following 128-residue polypeptide: Riboflavin kinase (128 aa).

CDP is bound at residue 12-17 (GKGEGK). Residues T41 and N43 each coordinate Mg(2+). Residues T97 and E105 each coordinate FMN. 110–113 (IKLR) provides a ligand contact to CDP.

This sequence belongs to the archaeal riboflavin kinase family. Mg(2+) is required as a cofactor.

It carries out the reaction riboflavin + CTP = CDP + FMN + H(+). It participates in cofactor biosynthesis; FMN biosynthesis; FMN from riboflavin (CTP route): step 1/1. Functionally, catalyzes the CTP-dependent phosphorylation of riboflavin (vitamin B2) to form flavin mononucleotide (FMN). In Methanococcus aeolicus (strain ATCC BAA-1280 / DSM 17508 / OCM 812 / Nankai-3), this protein is Riboflavin kinase.